We begin with the raw amino-acid sequence, 650 residues long: Acetyl-coenzyme A synthetase (650 aa).

CoA is bound by residues 191 to 194 (RGGR), Thr-311, and Asn-335. Residues 387-389 (GEP), 411-416 (DTWWQT), Asp-500, and Arg-515 each bind ATP. Residue Ser-523 coordinates CoA. Arg-526 provides a ligand contact to ATP. Mg(2+)-binding residues include Val-537, His-539, and Val-542. CoA is bound at residue Arg-584. The residue at position 609 (Lys-609) is an N6-acetyllysine.

Belongs to the ATP-dependent AMP-binding enzyme family. It depends on Mg(2+) as a cofactor. Acetylated. Deacetylation by the SIR2-homolog deacetylase activates the enzyme.

It catalyses the reaction acetate + ATP + CoA = acetyl-CoA + AMP + diphosphate. Its function is as follows. Catalyzes the conversion of acetate into acetyl-CoA (AcCoA), an essential intermediate at the junction of anabolic and catabolic pathways. AcsA undergoes a two-step reaction. In the first half reaction, AcsA combines acetate with ATP to form acetyl-adenylate (AcAMP) intermediate. In the second half reaction, it can then transfer the acetyl group from AcAMP to the sulfhydryl group of CoA, forming the product AcCoA. In Shewanella baltica (strain OS195), this protein is Acetyl-coenzyme A synthetase.